The sequence spans 138 residues: Translation initiation factor 5A (138 aa).

Position 37 is a hypusine (Lys-37).

This sequence belongs to the eIF-5A family.

The protein localises to the cytoplasm. Its function is as follows. Functions by promoting the formation of the first peptide bond. The polypeptide is Translation initiation factor 5A (eif5a) (Pyrococcus horikoshii (strain ATCC 700860 / DSM 12428 / JCM 9974 / NBRC 100139 / OT-3)).